Consider the following 75-residue polypeptide: Small ribosomal subunit protein bS18 (75 aa).

Belongs to the bacterial ribosomal protein bS18 family. In terms of assembly, part of the 30S ribosomal subunit. Forms a tight heterodimer with protein bS6.

Its function is as follows. Binds as a heterodimer with protein bS6 to the central domain of the 16S rRNA, where it helps stabilize the platform of the 30S subunit. The chain is Small ribosomal subunit protein bS18 from Moorella thermoacetica (strain ATCC 39073 / JCM 9320).